Here is a 496-residue protein sequence, read N- to C-terminus: Probable malate:quinone oxidoreductase (496 aa).

This sequence belongs to the MQO family. The cofactor is FAD.

It catalyses the reaction (S)-malate + a quinone = a quinol + oxaloacetate. The protein operates within carbohydrate metabolism; tricarboxylic acid cycle; oxaloacetate from (S)-malate (quinone route): step 1/1. This is Probable malate:quinone oxidoreductase from Prochlorococcus marinus (strain NATL2A).